The sequence spans 772 residues: Mitochondrial intermediate peptidase (772 aa).

The N-terminal 33 residues, 1-33 (MLARPSTTVLARRPFFRFRGCLNEPRPTKARCL), are a transit peptide targeting the mitochondrion. His556 provides a ligand contact to Zn(2+). The active site involves Glu557. Zn(2+)-binding residues include His560 and His563.

This sequence belongs to the peptidase M3 family. The cofactor is Zn(2+).

The protein resides in the mitochondrion matrix. It catalyses the reaction Release of an N-terminal octapeptide as second stage of processing of some proteins imported into the mitochondrion.. In terms of biological role, cleaves proteins, imported into the mitochondrion, to their mature size. While most mitochondrial precursor proteins are processed to the mature form in one step by mitochondrial processing peptidase (MPP), the sequential cleavage by MIP of an octapeptide after initial processing by MPP is a required step for a subgroup of nuclear-encoded precursor proteins destined for the matrix or the inner membrane. The chain is Mitochondrial intermediate peptidase (OCT1) from Coprinopsis scobicola (Ink cap fungus).